A 1270-amino-acid chain; its full sequence is Glycine betaine reductase ATRR (1270 aa).

The tract at residues 14–418 is adenylation (A) domain; that stretch reads FTQQVRASPN…MIKLRGYSVV (405 aa). One can recognise a Carrier domain in the interval 528 to 605; that stretch reads KEDPIGIEDI…GHLDTVRAIR (78 aa). Residue Ser-565 is modified to O-(pantetheine 4'-phosphoryl)serine. The tract at residues 643-937 is carboxylic acid reductase domain R1; the sequence is KTVLLTGVTG…EPLSWDDWVA (295 aa). The interval 1026-1256 is aldehyde reductase domain R2; that stretch reads PLSGKVAVVT…IYALRQPEHV (231 aa).

This sequence belongs to the NRP synthetase family.

Its activity is regulated as follows. The tetramethylammonium ion, which mimics the head group of glycine betaine, acts as a competitive inhibitor of ATRR A domain, whereas the potency decreased by three orders of magnitude with dimethylammonium. Choline is a mixed inhibitor for both glycine betaine reductase and aldehyde reductase activity but more potent in competition against glycine betaine in the first reduction step. Therefore, choline could act as a feedback inhibitor to regulate ATRR enzymatic activity. The lowered binding affinity of choline to R2 favors the release of choline after glycine betaine aldehyde reduction to avoid direct product inhibition. Functionally, NRPS-like enzyme with an unusual domain architecture that converts back glycine betaine to choline via a 2-step reduction mechanism, and thereby can be an alternative source of choline. Permits direct reutilization of endogenously stored glycine betaine for on-demand biosynthesis of choline and choline derivatives, including phospholipid phosphatidylcholine (PC) which has an essential role in maintaining membrane integrity and functionality, or choline-O-sulfate, a mean for intracellular sulfate storage. Glycine betaine is activated by the adenylation (A) domain, and transferred to the thiolation (T) domain. Movement of the phosphopantetheine arm to the thioester reductase domain R1 then allows thioester reduction by NADPH of glycine betainoyl thioester to glycine betaine aldehyde, which is in turn reduced to choline by the aldehyde reductase domain R2. This is Glycine betaine reductase ATRR from Emericella nidulans (strain FGSC A4 / ATCC 38163 / CBS 112.46 / NRRL 194 / M139) (Aspergillus nidulans).